A 1101-amino-acid chain; its full sequence is Endoglucanase C (1101 aa).

The signal sequence occupies residues 1–32 (MVSRRSSQARGALTAVVATLALALAGSGTALA). 2 CBM-cenC domains span residues 64-173 (LCVA…TFCL) and 212-318 (MCVD…EFCI). Residues 329-880 (PPPGYEPDTG…PDGCAPSACY (552 aa)) are catalytic. Asp-506 functions as the Nucleophile in the catalytic mechanism. His-831 is a catalytic residue. Positions 838-865 (QLDPSLPSPPPGSLAGGPNSQAATWDPT) are disordered. Active-site residues include Asp-882 and Glu-891. 2 Ig-like domains span residues 918 to 1006 (TAPV…LTVE) and 1008 to 1097 (AAPV…LAVQ).

This sequence belongs to the glycosyl hydrolase 9 (cellulase E) family.

The catalysed reaction is Endohydrolysis of (1-&gt;4)-beta-D-glucosidic linkages in cellulose, lichenin and cereal beta-D-glucans.. In terms of biological role, the biological conversion of cellulose to glucose generally requires three types of hydrolytic enzymes: (1) Endoglucanases which cut internal beta-1,4-glucosidic bonds; (2) Exocellobiohydrolases that cut the disaccharide cellobiose from the non-reducing end of the cellulose polymer chain; (3) Beta-1,4-glucosidases which hydrolyze the cellobiose and other short cello-oligosaccharides to glucose. The protein is Endoglucanase C (cenC) of Cellulomonas fimi (strain ATCC 484 / DSM 20113 / JCM 1341 / CCUG 24087 / LMG 16345 / NBRC 15513 / NCIMB 8980 / NCTC 7547 / NRS-133).